The chain runs to 113 residues: MAGFGLPNFGQLTEAFRKAQQIQQNAQKLQEELDAMEIEGSSPDGRASIWLSGNQQPLRVRIEPSLLAEGQDASETAILAALQSAYEHSTTTMKEQMEELTGGLNLNLPGMSE.

Belongs to the YbaB/EbfC family. Homodimer.

The protein localises to the cytoplasm. Its subcellular location is the nucleoid. Binds to DNA and alters its conformation. May be involved in regulation of gene expression, nucleoid organization and DNA protection. This Prochlorococcus marinus (strain MIT 9313) protein is Nucleoid-associated protein PMT_0025.